A 240-amino-acid polypeptide reads, in one-letter code: Probable Ni/Fe-hydrogenase B-type cytochrome subunit (240 aa).

4 helical membrane-spanning segments follow: residues 31-51 (LWHWVTALSIVVLGVTGYFIG), 75-95 (FAAGYVLAIGFLGRVYWAFVG), 142-163 (LAMFCFFVVGAVFMSVTGFALY), and 196-213 (LGMWYLVVFVMVHVYLAV).

This sequence belongs to the HupC/HyaC/HydC family.

Its subcellular location is the cell membrane. Functionally, probable b-type cytochrome. This Azotobacter vinelandii protein is Probable Ni/Fe-hydrogenase B-type cytochrome subunit (hoxZ).